The chain runs to 316 residues: Acetyl-coenzyme A carboxylase carboxyl transferase subunit alpha (316 aa).

In terms of domain architecture, CoA carboxyltransferase C-terminal spans 36 to 290 (PLRTQLETLR…GSVISRHLDD (255 aa)).

It belongs to the AccA family. As to quaternary structure, acetyl-CoA carboxylase is a heterohexamer composed of biotin carboxyl carrier protein (AccB), biotin carboxylase (AccC) and two subunits each of ACCase subunit alpha (AccA) and ACCase subunit beta (AccD).

The protein localises to the cytoplasm. The catalysed reaction is N(6)-carboxybiotinyl-L-lysyl-[protein] + acetyl-CoA = N(6)-biotinyl-L-lysyl-[protein] + malonyl-CoA. It participates in lipid metabolism; malonyl-CoA biosynthesis; malonyl-CoA from acetyl-CoA: step 1/1. Component of the acetyl coenzyme A carboxylase (ACC) complex. First, biotin carboxylase catalyzes the carboxylation of biotin on its carrier protein (BCCP) and then the CO(2) group is transferred by the carboxyltransferase to acetyl-CoA to form malonyl-CoA. The sequence is that of Acetyl-coenzyme A carboxylase carboxyl transferase subunit alpha from Deinococcus radiodurans (strain ATCC 13939 / DSM 20539 / JCM 16871 / CCUG 27074 / LMG 4051 / NBRC 15346 / NCIMB 9279 / VKM B-1422 / R1).